Here is a 1054-residue protein sequence, read N- to C-terminus: DIS3-like exonuclease 1 (1054 aa).

Positions 236-313 constitute a CSD1 domain; it reads AGIKSGRYIQ…WKGRTAALCE (78 aa). The disordered stretch occupies residues 313 to 332; sequence ENDSEDKASGESPSEPMPTG. In terms of domain architecture, CSD2 spans 365 to 431; it reads ILVTPWDYRI…GEIATILVEN (67 aa). The region spanning 465 to 816 is the RNB domain; that stretch reads RRDLRSTHLV…VHRLLMAAIS (352 aa). A Phosphoserine modification is found at Ser989.

This sequence belongs to the RNR ribonuclease family. As to quaternary structure, component of the RNA exosome complex. The catalytically inactive RNA exosome core (Exo-9) complex is believed to associate with catalytic subunits EXOSC10, and DIS3 or DIS3L in cytoplasmic- and nuclear-specific RNA exosome complex forms. Mg(2+) is required as a cofactor.

It is found in the cytoplasm. It catalyses the reaction Exonucleolytic cleavage in the 3'- to 5'-direction to yield nucleoside 5'-phosphates.. In terms of biological role, catalytic component of the RNA exosome complex which has 3'-&gt;5' exoribonuclease activity and participates in a multitude of cellular RNA processing and degradation events. In the cytoplasm, the RNA exosome complex is involved in general mRNA turnover and specifically degrades inherently unstable mRNAs containing AU-rich elements (AREs) within their 3' untranslated regions, and in RNA surveillance pathways, preventing translation of aberrant mRNAs. It seems to be involved in degradation of histone mRNA. This Rattus norvegicus (Rat) protein is DIS3-like exonuclease 1 (Dis3l).